The following is an 85-amino-acid chain: Large ribosomal subunit protein bL27 (85 aa).

The span at 1–10 (MAQKKGGGST) shows a compositional bias: gly residues. A disordered region spans residues 1-20 (MAQKKGGGSTRNGRDSKPKM).

The protein belongs to the bacterial ribosomal protein bL27 family.

The chain is Large ribosomal subunit protein bL27 from Delftia acidovorans (strain DSM 14801 / SPH-1).